The primary structure comprises 180 residues: Shikimate kinase (180 aa).

14–19 (GAGKSC) provides a ligand contact to ATP. A Mg(2+)-binding site is contributed by Ser-18. Positions 36, 60, and 82 each coordinate substrate. Arg-120 provides a ligand contact to ATP. Arg-139 serves as a coordination point for substrate.

This sequence belongs to the shikimate kinase family. In terms of assembly, monomer. Mg(2+) is required as a cofactor.

The protein localises to the cytoplasm. The enzyme catalyses shikimate + ATP = 3-phosphoshikimate + ADP + H(+). The protein operates within metabolic intermediate biosynthesis; chorismate biosynthesis; chorismate from D-erythrose 4-phosphate and phosphoenolpyruvate: step 5/7. Functionally, catalyzes the specific phosphorylation of the 3-hydroxyl group of shikimic acid using ATP as a cosubstrate. In Xanthomonas euvesicatoria pv. vesicatoria (strain 85-10) (Xanthomonas campestris pv. vesicatoria), this protein is Shikimate kinase.